The primary structure comprises 169 residues: MAEMKKTIDNKPAPKGEKKANRRGAARLAAVQALYQMDVGGAGLNDIFAEFESHWLGNEVEGDQYLPAEQAFFQDVVSGVVRDQAKLDPLIDVALAKGWPLARIDAILRAVMRAGAYELEHRKDVPARVVVSEYVDVANAFVEGEETGMVNAVLDQIARQFRADEFSRG.

The span at 1 to 19 shows a compositional bias: basic and acidic residues; that stretch reads MAEMKKTIDNKPAPKGEKK. Residues 1 to 22 are disordered; the sequence is MAEMKKTIDNKPAPKGEKKANR.

It belongs to the NusB family.

In terms of biological role, involved in transcription antitermination. Required for transcription of ribosomal RNA (rRNA) genes. Binds specifically to the boxA antiterminator sequence of the ribosomal RNA (rrn) operons. The protein is Transcription antitermination protein NusB of Rhodopseudomonas palustris (strain BisB18).